The sequence spans 506 residues: UPF0371 protein FN1121 (506 aa).

Belongs to the UPF0371 family.

This is UPF0371 protein FN1121 from Fusobacterium nucleatum subsp. nucleatum (strain ATCC 25586 / DSM 15643 / BCRC 10681 / CIP 101130 / JCM 8532 / KCTC 2640 / LMG 13131 / VPI 4355).